The primary structure comprises 78 residues: D-alanyl carrier protein (78 aa).

Residues 1–78 (MAFRENVLEI…MIITQLEALK (78 aa)) form the Carrier domain. S36 bears the O-(pantetheine 4'-phosphoryl)serine mark.

This sequence belongs to the DltC family. 4'-phosphopantetheine is transferred from CoA to a specific serine of apo-DCP.

Its subcellular location is the cytoplasm. Its pathway is cell wall biogenesis; lipoteichoic acid biosynthesis. Its function is as follows. Carrier protein involved in the D-alanylation of lipoteichoic acid (LTA). The loading of thioester-linked D-alanine onto DltC is catalyzed by D-alanine--D-alanyl carrier protein ligase DltA. The DltC-carried D-alanyl group is further transferred to cell membrane phosphatidylglycerol (PG) by forming an ester bond, probably catalyzed by DltD. D-alanylation of LTA plays an important role in modulating the properties of the cell wall in Gram-positive bacteria, influencing the net charge of the cell wall. This is D-alanyl carrier protein from Listeria monocytogenes serotype 4b (strain CLIP80459).